Reading from the N-terminus, the 241-residue chain is MEKFAPEFHGEDANNRATKFLESIKGKFTSPKDPKKKDSIISVNSIDIEVTKESPITSNSTIINPTNETDDTAGNKPNYQRKPLVSFKEDPTPSDNPFSKLYKETIETFDNNEEESSYSYEEINDQTNDNITARLDRIDEKLSEILGMLHTLVVASAGPTSARDGIRDAMIGLREEMIEKIRTEALMTNDRLEAMARLRNEESEKMAKDTSDEVSLNPTSEKLNNLLEGNDSDNDLSLEDF.

The tract at residues 1–30 is binding to monomeric RNA-free nucleoprotein; that stretch reads MEKFAPEFHGEDANNRATKFLESIKGKFTS. Positions 39–57 are important for viral particle assembly; sequence SIISVNSIDIEVTKESPIT. The segment covering 58-67 has biased composition (polar residues); the sequence is SNSTIINPTN. The interval 58–78 is disordered; the sequence is SNSTIINPTNETDDTAGNKPN. Positions 81–87 are binding to host phosphatase PP1; that stretch reads RKPLVSF. The tract at residues 90-110 is binding to protein M2-1; it reads DPTPSDNPFSKLYKETIETFD. Phosphothreonine; by host is present on T108. S116, S117, and S119 each carry phosphoserine; by host. The oligomerization and binding to RNA-directed RNA polymerase L stretch occupies residues 120–160; it reads YEEINDQTNDNITARLDRIDEKLSEILGMLHTLVVASAGPT. The segment covering 201–211 has biased composition (basic and acidic residues); sequence EESEKMAKDTS. The segment at 201–241 is disordered; it reads EESEKMAKDTSDEVSLNPTSEKLNNLLEGNDSDNDLSLEDF. The span at 213–223 shows a compositional bias: polar residues; the sequence is EVSLNPTSEKL. Residues 216 to 232 form a binding to RNA-directed RNA polymerase L region; that stretch reads LNPTSEKLNNLLEGNDS. Positions 230–241 are enriched in acidic residues; sequence NDSDNDLSLEDF. Phosphoserine; by host is present on residues S232 and S237. Residues 232 to 241 are binding to the N-RNA complex; sequence SDNDLSLEDF.

Belongs to the pneumoviridae phosphoprotein P family. As to quaternary structure, homotetramer. Interacts with protein M2-1; the interaction between the two tetramers is required for the anti-termination and elongation transcriptional activities of protein M2-1. Interacts with host phosphatase PP1; this interaction recruits PP1 to the inclusion bodies. Formation of a complex PP1/M2-1/P allows P to target host PP1 phosphatase to the M2-1 substrate. Interacts (via C-terminus) with the nucleoprotein N (via N-terminus); the phosphorylated phosphoprotein P binds to N-RNA complex. Interacts (via N-terminus) with the monomeric RNA-free nucleoprotein N. Interacts (via C-terminus) with RNA-directed RNA polymerase L; the association of P and L forms the polymerase complex. Constitutively phosphorylated by host. Phosphorylation at S-116, S-117, S-119, S-232 and S-237 is required for transcription inhibition by M2-2 and viral particle egress. Phosphorylation at S-232 and S-237 increases the affinity of the binding to the nucleoprotein.

The protein localises to the virion. It localises to the host cytoplasm. In terms of biological role, plays critical roles in regulating RNA replication and transcription through its interactions with multiple proteins. Tethers the RNA-directed RNA polymerase L to the nucleoprotein-RNA complex. Recruits the M2-1 protein, a processivity factor that is required for efficient transcription of viral RNA. Acts as a chaperone for neo-synthesized nucleoprotein by forming an N-P complex that preserves N in a monomeric and RNA-free state and prevents the association of nascent N with host cell RNAs. Recruits the host phosphatase PP1 to inclusion bodies to regulate viral transcription. Together with the nucleoprotein, sequesters host NF-kappa-B in inclusion bodies (IBs) thereby inhibiting this host defense pathway. This chain is Phosphoprotein (P), found in Homo sapiens (Human).